Consider the following 662-residue polypeptide: MAVLTHGSPTPSGAYFDGKGINFTLFSAHAEQVTLCLFDEQGQERQIAMPARTGDIWHGYLPGGKPGQRYGYRVSGPFDPSRGHRFNPHKLLIDPRARALEGKVGDDPRFTGGVSQPDVRDSAAALPKCLVIHEEYDWQGDKPPAIPWGNTVVYEAHVRGLTQLHPDIPPELRGTYAALAHPALIEHLKTLGITTLELLPVQFHIDEPRLQKMGLSNYWGYNVLAPFAVDPDYASGREGISPLRELRDAVKALHNAGIEVILDVVFNHSAELDVFGPTLCQRGIDNASYYWLTPDGEYDNITGCGNALRLSHPYVTQWVIDCLNYWRDSCHVDGFRFDLGTVLGRTPAFDQHAPLFAALAADERLSACKLIAEPWDIGLGGYQLGNFPTGFSEWNDQYRDAMRGFWLRGEVPRGTFAQHFAASSRLFEQRGRLPSASINQITAHDGFTLLDLLCFNQKHNQMNGEENRDGSDNNHSNNFGCEGLVADAAIWQRRKACQRALLTTLLLSQGTPMLLAGDEQGHSQQGNNNAYCQNNILTWLDWGSADRALMTFTADLIRLRQQIPALTQDQWWQSGDSNVQWLDSQGQALSDAAWEQGCQQQLQILLSQRWLVLINATDHECEMHLPEGEWEGIPPFGVSDHAERLTTWRGSAHTICVLIKRD.

Aspartate 338 acts as the Nucleophile in catalysis. Glutamate 373 functions as the Proton donor in the catalytic mechanism.

Belongs to the glycosyl hydrolase 13 family.

It catalyses the reaction Hydrolysis of (1-&gt;6)-alpha-D-glucosidic linkages to branches with degrees of polymerization of three or four glucose residues in limit dextrin.. The protein operates within glycan degradation; glycogen degradation. In terms of biological role, removes maltotriose and maltotetraose chains that are attached by 1,6-alpha-linkage to the limit dextrin main chain, generating a debranched limit dextrin. The protein is Glycogen debranching enzyme of Yersinia pseudotuberculosis serotype IB (strain PB1/+).